A 449-amino-acid chain; its full sequence is Cortexillin-2 (449 aa).

The tract at residues 1 to 231 (MTDLHKEWEK…ILYTSLFFHA (231 aa)) is actin-binding. 2 consecutive Calponin-homology (CH) domains span residues 10–119 (KVQE…RKYR) and 128–233 (KSSE…HAYR). Coiled coils occupy residues 232–364 (YRAK…AEGL) and 408–441 (QFEE…LKSA).

It belongs to the cortexillin family. As to quaternary structure, homodimer; parallel.

The protein localises to the cytoplasm. The protein resides in the cytoskeleton. Its function is as follows. Actin-bundling protein. When linked to F-actin the actin filaments form preferentially anti-parallel bundles that associate into meshworks. Plays a major role in cytokinesis. In Heterostelium pallidum (strain ATCC 26659 / Pp 5 / PN500) (Cellular slime mold), this protein is Cortexillin-2 (ctxB).